Consider the following 380-residue polypeptide: UDP-N-acetylglucosamine 2-epimerase (380 aa).

Belongs to the UDP-N-acetylglucosamine 2-epimerase family.

The protein localises to the cytoplasm. The catalysed reaction is UDP-N-acetyl-alpha-D-glucosamine = UDP-N-acetyl-alpha-D-mannosamine. Its pathway is cell wall biogenesis; poly(glycerol phosphate) teichoic acid biosynthesis. In terms of biological role, catalyzes the conversion of UDP-N-acetylglucosamine into UDP-N-acetylmannosamine, a precursor of the teichoic acid linkage unit. This Bacillus subtilis (strain 168) protein is UDP-N-acetylglucosamine 2-epimerase (mnaA).